The following is a 328-amino-acid chain: Cytochrome f (328 aa).

The N-terminal stretch at 1 to 44 is a signal peptide; sequence MRTPDFSAIWQASKQLTARIILLAFATFALYVFHDLAFPQGAAA. Residues Tyr45, Cys66, Cys69, and His70 each coordinate heme. The helical transmembrane segment at 294–314 threads the bilayer; it reads IKGLMVFLAGIMLAQILLVIK.

Belongs to the cytochrome f family. In terms of assembly, the 4 large subunits of the cytochrome b6-f complex are cytochrome b6, subunit IV (17 kDa polypeptide, PetD), cytochrome f and the Rieske protein, while the 4 small subunits are PetG, PetL, PetM and PetN. The complex functions as a dimer. Requires heme as cofactor.

The protein localises to the cellular thylakoid membrane. Its function is as follows. Component of the cytochrome b6-f complex, which mediates electron transfer between photosystem II (PSII) and photosystem I (PSI), cyclic electron flow around PSI, and state transitions. In Rippkaea orientalis (strain PCC 8801 / RF-1) (Cyanothece sp. (strain PCC 8801)), this protein is Cytochrome f.